Here is a 446-residue protein sequence, read N- to C-terminus: ATP-dependent protease ATPase subunit HslU (446 aa).

ATP contacts are provided by residues Ile18, Gly60–Glu65, Asp259, Glu324, and Arg396.

Belongs to the ClpX chaperone family. HslU subfamily. A double ring-shaped homohexamer of HslV is capped on each side by a ring-shaped HslU homohexamer. The assembly of the HslU/HslV complex is dependent on binding of ATP.

It localises to the cytoplasm. Its function is as follows. ATPase subunit of a proteasome-like degradation complex; this subunit has chaperone activity. The binding of ATP and its subsequent hydrolysis by HslU are essential for unfolding of protein substrates subsequently hydrolyzed by HslV. HslU recognizes the N-terminal part of its protein substrates and unfolds these before they are guided to HslV for hydrolysis. The chain is ATP-dependent protease ATPase subunit HslU from Baumannia cicadellinicola subsp. Homalodisca coagulata.